A 766-amino-acid chain; its full sequence is Probable beta-glucosidase K (766 aa).

N19 carries N-linked (GlcNAc...) asparagine glycosylation. The active site involves D196. N-linked (GlcNAc...) asparagine glycans are attached at residues N288, N453, and N748. Residues 369 to 528 (EGQPGLGMRF…DPERAIARAV (160 aa)) form the PA14 domain. Residues 726–766 (LGRRGRSGSSPAVYRGRSNNVVNRTSHQGAQRISKGGFAAR) are disordered. Polar residues predominate over residues 742–756 (RSNNVVNRTSHQGAQ).

The protein belongs to the glycosyl hydrolase 3 family.

It localises to the secreted. The enzyme catalyses Hydrolysis of terminal, non-reducing beta-D-glucosyl residues with release of beta-D-glucose.. It participates in glycan metabolism; cellulose degradation. Its function is as follows. Beta-glucosidases are one of a number of cellulolytic enzymes involved in the degradation of cellulosic biomass. Catalyzes the last step releasing glucose from the inhibitory cellobiose. This chain is Probable beta-glucosidase K (bglK), found in Aspergillus fumigatus (strain CBS 144.89 / FGSC A1163 / CEA10) (Neosartorya fumigata).